We begin with the raw amino-acid sequence, 212 residues long: N-(5'-phosphoribosyl)anthranilate isomerase (212 aa).

The protein belongs to the TrpF family.

It catalyses the reaction N-(5-phospho-beta-D-ribosyl)anthranilate = 1-(2-carboxyphenylamino)-1-deoxy-D-ribulose 5-phosphate. It functions in the pathway amino-acid biosynthesis; L-tryptophan biosynthesis; L-tryptophan from chorismate: step 3/5. The protein is N-(5'-phosphoribosyl)anthranilate isomerase of Microcystis aeruginosa (strain NIES-843 / IAM M-2473).